The chain runs to 474 residues: Equilibrative nucleoside transporter 3 (474 aa).

Topologically, residues 1-53 are cytoplasmic; the sequence is MAIISEDDFRHTSNSTYRTASSSLRADQEALLEKLLDRPPPSLQRPEDRFNGT. 2 positions are modified to phosphoserine: Ser-21 and Ser-23. Positions 31-32 match the Dileucine internalization motif motif; it reads LL. A helical membrane pass occupies residues 54–74; sequence YIIFFSLGIGGLLPWNFFVTA. Over 75-105 the chain is Extracellular; it reads QEYWIFKLSNCSSPAAGEEPKDSDILNYFES. N-linked (GlcNAc...) asparagine glycosylation occurs at Asn-84. Residues 106–126 form a helical membrane-spanning segment; it reads YLAVASTVPSVLCLALNFLLV. Residues 127–134 are Cytoplasmic-facing; sequence NRVPIRVR. Residues 135–155 form a helical membrane-spanning segment; it reads VLASLTVMLAIFIVMTVLVKV. Residues 156–161 are Extracellular-facing; the sequence is DTSSWT. The chain crosses the membrane as a helical span at residues 162 to 182; the sequence is HSFFTITITCMAILSGTSTIF. The Cytoplasmic segment spans residues 183-201; that stretch reads NSSVFGMTGSFPMRNSQAL. A helical transmembrane segment spans residues 202–222; that stretch reads ISGGAMGGTLSAVASLVDLAV. Over 223-230 the chain is Extracellular; sequence ASDVTDST. A helical transmembrane segment spans residues 231 to 251; it reads LAFFLTADIFLALCIGLYLLL. Residues 252–305 lie on the Cytoplasmic side of the membrane; sequence PRLDYARYYMKPVWPTVFSGEEQLPQDSPSPTSVAPGSSDPQTPPLGPILKKTT. The interval 272–294 is disordered; the sequence is EEQLPQDSPSPTSVAPGSSDPQT. A compositionally biased stretch (polar residues) spans 276-292; the sequence is PQDSPSPTSVAPGSSDP. Residues 306-326 form a helical membrane-spanning segment; it reads GLGFCIIYLFFITSLIFPAIC. At 327-339 the chain is on the extracellular side; that stretch reads TNIESLSKGSGSP. The helical transmembrane segment at 340 to 357 threads the bilayer; sequence WSTKFFVPLTTFLLYNFA. Residues 358–376 are Cytoplasmic-facing; sequence DLCGRQVTAWIQVPGPRSK. A helical membrane pass occupies residues 377–397; the sequence is ALPGLALLRTCFVPLFVFCNY. Topologically, residues 398 to 414 are extracellular; that stretch reads QPRGHLHTVLFQSDVYP. A helical transmembrane segment spans residues 415 to 435; sequence VLFTSLLGLSNGYLSTLALIY. Topologically, residues 436–453 are cytoplasmic; sequence GPKIVPRELAEATGVVMT. A helical membrane pass occupies residues 454-474; sequence FYMGLGLVLGSACSALLVHLI.

It belongs to the SLC29A/ENT transporter (TC 2.A.57) family.

The protein localises to the lysosome membrane. Its subcellular location is the late endosome membrane. It is found in the mitochondrion membrane. It localises to the cell membrane. The catalysed reaction is adenosine(in) = adenosine(out). The enzyme catalyses guanosine(in) = guanosine(out). It carries out the reaction inosine(in) = inosine(out). It catalyses the reaction uridine(out) = uridine(in). The catalysed reaction is cytidine(in) = cytidine(out). The enzyme catalyses thymidine(in) = thymidine(out). It carries out the reaction 2'-deoxyadenosine(in) = 2'-deoxyadenosine(out). It catalyses the reaction 2'-deoxycytidine(in) = 2'-deoxycytidine(out). The catalysed reaction is guanine(out) = guanine(in). The enzyme catalyses uracil(in) = uracil(out). It carries out the reaction (R)-noradrenaline(out) = (R)-noradrenaline(in). It catalyses the reaction dopamine(out) = dopamine(in). The catalysed reaction is serotonin(out) = serotonin(in). The enzyme catalyses tyramine(in) = tyramine(out). It carries out the reaction ATP(in) = ATP(out). Uniporter that mediates the facilitative transport of nucleoside across lysosomal and mitochondrial membranes. Functions as a non-electrogenic Na(+)-independent transporter. Substrate transport is pH-dependent and enhanced under acidic condition, probably reflecting the location of the transporter in acidic intracellular compartments. Proton is not a cotransporting ion but most likely change the ionization state of the transporter which dictates transport-permissible/impermissible conformation for nucleoside translocation. May direct the nucleoside transport from lysosomes to cytosol or cytosol to mitochondria to facilitate the fundamental function of salvage synthesis of nucleic acids. Involved in the transport of nucleosides (adenosine, guanosine, uridine, thymidine, cytidine and inosine) and deoxynucleosides (deoxyadenosine, deoxycytidine). Also mediates transport of purine nucleobases (adenine, guanine) and pyrimidine nucleobases (uracil). Also able to transport monoamine neurotransmitters dopamine, serotonin, noradrenaline and tyramine. Capable of transporting ATP. Mediates nucleoside export from lysosomes in macrophages, which regulates macrophage functions and numbers. This Bos taurus (Bovine) protein is Equilibrative nucleoside transporter 3 (SLC29A3).